The primary structure comprises 210 residues: MSTLHKVKAYFGMAPMDDYEDDYYEDDDRVPARGYRRPREDRFEDEAYPRGYDDRAREYDEPAGYRGGFDDARFEPRLRGPREFDRTPPRFGGLRGSTRGALAMDPRGMAELFEAGSPLAKITTLRPKDYSEARTIGERFRDGTPVIMDLVSMDNADAKRLVDFAAGLAFALRGSFDKVATKVFLLSPADVDVTAEQRRRIAEAGFYSYQ.

2 disordered regions span residues aspartate 22–alanine 72 and arginine 79–threonine 98. Basic and acidic residues-rich tracts occupy residues arginine 37–aspartate 60 and arginine 79–proline 88.

This sequence belongs to the SepF family. As to quaternary structure, homodimer. Interacts with FtsZ.

The protein localises to the cytoplasm. Cell division protein that is part of the divisome complex and is recruited early to the Z-ring. Probably stimulates Z-ring formation, perhaps through the cross-linking of FtsZ protofilaments. Its function overlaps with FtsA. This is Cell division protein SepF from Mycolicibacterium vanbaalenii (strain DSM 7251 / JCM 13017 / BCRC 16820 / KCTC 9966 / NRRL B-24157 / PYR-1) (Mycobacterium vanbaalenii).